Reading from the N-terminus, the 271-residue chain is 3-methyl-2-oxobutanoate hydroxymethyltransferase (271 aa).

Mg(2+) is bound by residues Asp51 and Asp90. Residues 51-52 (DS), Asp90, and Lys118 each bind 3-methyl-2-oxobutanoate. Glu120 contributes to the Mg(2+) binding site. Glu186 serves as the catalytic Proton acceptor.

This sequence belongs to the PanB family. As to quaternary structure, homodecamer; pentamer of dimers. Mg(2+) serves as cofactor.

It localises to the cytoplasm. The catalysed reaction is 3-methyl-2-oxobutanoate + (6R)-5,10-methylene-5,6,7,8-tetrahydrofolate + H2O = 2-dehydropantoate + (6S)-5,6,7,8-tetrahydrofolate. Its pathway is cofactor biosynthesis; (R)-pantothenate biosynthesis; (R)-pantoate from 3-methyl-2-oxobutanoate: step 1/2. Its function is as follows. Catalyzes the reversible reaction in which hydroxymethyl group from 5,10-methylenetetrahydrofolate is transferred onto alpha-ketoisovalerate to form ketopantoate. The sequence is that of 3-methyl-2-oxobutanoate hydroxymethyltransferase from Xanthomonas campestris pv. campestris (strain B100).